A 496-amino-acid polypeptide reads, in one-letter code: Aspartyl/glutamyl-tRNA(Asn/Gln) amidotransferase subunit B (496 aa).

It belongs to the GatB/GatE family. GatB subfamily. Heterotrimer of A, B and C subunits.

The enzyme catalyses L-glutamyl-tRNA(Gln) + L-glutamine + ATP + H2O = L-glutaminyl-tRNA(Gln) + L-glutamate + ADP + phosphate + H(+). It catalyses the reaction L-aspartyl-tRNA(Asn) + L-glutamine + ATP + H2O = L-asparaginyl-tRNA(Asn) + L-glutamate + ADP + phosphate + 2 H(+). Functionally, allows the formation of correctly charged Asn-tRNA(Asn) or Gln-tRNA(Gln) through the transamidation of misacylated Asp-tRNA(Asn) or Glu-tRNA(Gln) in organisms which lack either or both of asparaginyl-tRNA or glutaminyl-tRNA synthetases. The reaction takes place in the presence of glutamine and ATP through an activated phospho-Asp-tRNA(Asn) or phospho-Glu-tRNA(Gln). The protein is Aspartyl/glutamyl-tRNA(Asn/Gln) amidotransferase subunit B of Nitrosospira multiformis (strain ATCC 25196 / NCIMB 11849 / C 71).